A 331-amino-acid polypeptide reads, in one-letter code: Ferrochelatase (331 aa).

2 residues coordinate Fe cation: His187 and Glu286.

Belongs to the ferrochelatase family.

It localises to the cytoplasm. It catalyses the reaction heme b + 2 H(+) = protoporphyrin IX + Fe(2+). Its pathway is porphyrin-containing compound metabolism; protoheme biosynthesis; protoheme from protoporphyrin-IX: step 1/1. In terms of biological role, catalyzes the ferrous insertion into protoporphyrin IX. The polypeptide is Ferrochelatase (Legionella pneumophila subsp. pneumophila (strain Philadelphia 1 / ATCC 33152 / DSM 7513)).